Reading from the N-terminus, the 259-residue chain is UPF0246 protein NGK_0633 (259 aa).

This sequence belongs to the UPF0246 family.

The protein is UPF0246 protein NGK_0633 of Neisseria gonorrhoeae (strain NCCP11945).